The chain runs to 642 residues: MPVITLPDGSQRHYDHAVSPMDVALDIGPGLAKACIAGRVNGELVDACDLIENDAQLSIITAKDEEGLEIIRHSCAHLLGHAIKQLWPHTKMAIGPVIDNGFYYDVDLDRTLTQEDVEALEKRMHELAEKNYDVIKKKVSWHAARETFANRGESYKVSILDENIAHDDKPGLYFHEEYVDMCRGPHVPNMRFCHHFKLMKTAGAYWRGDSNNKMLQRIYGTAWADKKALNAYLQRLEEAAKRDHRKIGKQLDLYHMQEEAPGMVFWHNDGWTIFRELEVFVRSKLKEYQYQEVKGPFMMDRVLWEKTGHWDNYKDAMFTTSSENREYCIKPMNCPGHVQIFNQGLKSYRDLPLRMAEFGSCHRNEPSGSLHGLMRVRGFTQDDAHIFCTEEQIRDEVNGCIRLVYDMYSTFGFEKIVVKLSTRPEKRIGSDEMWDRAEADLAVALEENNIPFEYQLGEGAFYGPKIEFTLYDCLDRAWQCGTVQLDFSLPSRLSASYVGEDNERKVPVMIHRAILGSMERFIGILTEEFAGFFPTWLAPVQVVIMNITDSQSEYVNELTQKLSNAGIRVKADLRNEKIGFKIREHTLRRVPYMLVCGDKEVESGKVAVRTRRGKDLGSMDVNEVIEKLQQEIRSRSLKQLEE.

A TGS domain is found at 1–61; sequence MPVITLPDGS…ENDAQLSIIT (61 aa). The tract at residues 243–534 is catalytic; the sequence is DHRKIGKQLD…LTEEFAGFFP (292 aa). Residue K286 is modified to N6-acetyllysine. Zn(2+) is bound by residues C334, H385, and H511.

The protein belongs to the class-II aminoacyl-tRNA synthetase family. As to quaternary structure, homodimer. It depends on Zn(2+) as a cofactor.

It is found in the cytoplasm. The enzyme catalyses tRNA(Thr) + L-threonine + ATP = L-threonyl-tRNA(Thr) + AMP + diphosphate + H(+). In terms of biological role, catalyzes the attachment of threonine to tRNA(Thr) in a two-step reaction: L-threonine is first activated by ATP to form Thr-AMP and then transferred to the acceptor end of tRNA(Thr). Also edits incorrectly charged L-seryl-tRNA(Thr). The polypeptide is Threonine--tRNA ligase (Shigella boydii serotype 18 (strain CDC 3083-94 / BS512)).